Consider the following 144-residue polypeptide: Granulocyte-macrophage colony-stimulating factor (144 aa).

The N-terminal stretch at Met-1–Ser-17 is a signal peptide. An O-linked (GalNAc...) serine glycan is attached at Ser-24. O-linked (GalNAc...) threonine glycosylation occurs at Thr-27. Asn-44 and Asn-54 each carry an N-linked (GlcNAc...) asparagine glycan. Disulfide bonds link Cys-71/Cys-113 and Cys-105/Cys-138.

The protein belongs to the GM-CSF family. In terms of assembly, monomer. The signaling GM-CSF receptor complex is a dodecamer of two head-to-head hexamers of two alpha, two beta, and two ligand subunits.

It is found in the secreted. Functionally, cytokine that stimulates the growth and differentiation of hematopoietic precursor cells from various lineages, including granulocytes, macrophages, eosinophils and erythrocytes. The polypeptide is Granulocyte-macrophage colony-stimulating factor (CSF2) (Chlorocebus aethiops (Green monkey)).